A 678-amino-acid polypeptide reads, in one-letter code: RAS guanyl-releasing protein 4 (678 aa).

Basic residues-rich tracts occupy residues 1–10 and 20–32; these read MNRKDIKRKS and GHGR…RHKT. Disordered stretches follow at residues 1–33 and 165–185; these read MNRK…HKTC and GDAS…MSSP. Positions 49-175 constitute an N-terminal Ras-GEF domain; the sequence is GVLSESSCSV…DASNLLSPGG (127 aa). The region spanning 201-432 is the Ras-GEF domain; that stretch reads ETEELAQHLT…YELSYAREPR (232 aa). An EF-hand domain is found at 466–501; that stretch reads HVEQLVESVFKNYDPEGHGSISLEDFEKLSANFPFA. The Phorbol-ester/DAG-type zinc-finger motif lies at 540 to 595; it reads LHAFQEVTFRKPTFCHSCNGFVSTGPLWGVTKRGYRCQDCGLCCHRHCRDQVRVEC. Disordered stretches follow at residues 598 to 620 and 651 to 678; these read RPET…LPPT and SSHS…KSSV. Residues 605–619 are compositionally biased toward pro residues; it reads PGPPGAPGPATPLPP.

It belongs to the RASGRP family. In terms of tissue distribution, expressed by mast cells and their progenitors (at protein level).

It localises to the cytoplasm. The protein localises to the cell membrane. In terms of biological role, functions as a cation- and diacylglycerol (DAG)-regulated nucleotide exchange factor activating Ras through the exchange of bound GDP for GTP. In neutrophils, participates in a phospholipase C-activating N-formyl peptide-activated GPCR (G protein-coupled receptor) signaling pathway by promoting Ras-mediated activation of PIK3CG/PI3Kgamma to promote neutrophil functional responses. In CD117(+) dendritic cells and mast cells, participates in an lipopolysaccharide (LPS)-activated signaling pathway that stimulates the production of interferon-gamma and other pro-inflammatory cytokines by natural killer (NK) cells. May function in mast cell differentiation. Does not appear to be required for the development of B-cells, DC-cells, T-cells, or NK-cells. The chain is RAS guanyl-releasing protein 4 (Rasgrp4) from Rattus norvegicus (Rat).